Here is a 209-residue protein sequence, read N- to C-terminus: MRNPVDTAMALVPMVVEQTNRGERSYDIYSRLLKERIIFLTGAVEDHMATLVCAQLLFLEAENPKKEIALYINSPGGVVTAGMAIYDTMQFIKPAVSTLCIGQAASMGSLLLAAGHKDMRFATPNSRIMVHQPSGGFQGQASDIERHARDILKMKRRLNEVYVKHTGRTYEEVEKTLDRDHFMDADEAQGWGVIDKVLTSRLEMEGEQA.

The active-site Nucleophile is the serine 106. Histidine 131 is a catalytic residue.

It belongs to the peptidase S14 family. Fourteen ClpP subunits assemble into 2 heptameric rings which stack back to back to give a disk-like structure with a central cavity, resembling the structure of eukaryotic proteasomes.

It is found in the cytoplasm. It catalyses the reaction Hydrolysis of proteins to small peptides in the presence of ATP and magnesium. alpha-casein is the usual test substrate. In the absence of ATP, only oligopeptides shorter than five residues are hydrolyzed (such as succinyl-Leu-Tyr-|-NHMec, and Leu-Tyr-Leu-|-Tyr-Trp, in which cleavage of the -Tyr-|-Leu- and -Tyr-|-Trp bonds also occurs).. Functionally, cleaves peptides in various proteins in a process that requires ATP hydrolysis. Has a chymotrypsin-like activity. Plays a major role in the degradation of misfolded proteins. The chain is ATP-dependent Clp protease proteolytic subunit 2 from Rhizobium etli (strain ATCC 51251 / DSM 11541 / JCM 21823 / NBRC 15573 / CFN 42).